Here is a 261-residue protein sequence, read N- to C-terminus: Pyridoxine-5'-phosphate oxidase (261 aa).

42–45 (RGDR) contributes to the pyridoxal 5'-phosphate binding site. 95 to 98 (RMLL) provides a ligand contact to FMN. Residue lysine 100 coordinates pyridoxal 5'-phosphate. Residues 110 to 111 (FT), 116 to 117 (RK), and glutamine 139 contribute to the FMN site. Pyridoxal 5'-phosphate-binding residues include tyrosine 157, arginine 161, and serine 165. Residues 174–175 (QS) and tryptophan 219 each bind FMN. 225–227 (RLH) contacts pyridoxal 5'-phosphate. FMN is bound at residue arginine 229. Phosphothreonine is present on threonine 238. Residue serine 241 is modified to Phosphoserine.

It belongs to the pyridoxamine 5'-phosphate oxidase family. As to quaternary structure, homodimer. Requires FMN as cofactor. Detected in adult liver.

The catalysed reaction is pyridoxamine 5'-phosphate + O2 + H2O = pyridoxal 5'-phosphate + H2O2 + NH4(+). It catalyses the reaction pyridoxine 5'-phosphate + O2 = pyridoxal 5'-phosphate + H2O2. The protein operates within cofactor metabolism; pyridoxal 5'-phosphate salvage; pyridoxal 5'-phosphate from pyridoxamine 5'-phosphate: step 1/1. Its pathway is cofactor metabolism; pyridoxal 5'-phosphate salvage; pyridoxal 5'-phosphate from pyridoxine 5'-phosphate: step 1/1. In terms of biological role, catalyzes the oxidation of either pyridoxine 5'-phosphate (PNP) or pyridoxamine 5'-phosphate (PMP) into pyridoxal 5'-phosphate (PLP). This chain is Pyridoxine-5'-phosphate oxidase (Pnpo), found in Rattus norvegicus (Rat).